Here is a 377-residue protein sequence, read N- to C-terminus: MSILFKIFASTLAVVSVVNAGELLNFENERDIIRGSYIVVMKDGTSSSDLKSHMNWAANVHHGNLAKQGPSRSIGFQFSFDIGGWRGYSGKFDNDTLNAIVNNAHVKYVEPDRMASATVLKIQKNAPSWGLGRISHTFRGFKNYLYHSSAGEGVLAYVVDTGIDINHPEFEGRAEWGINVVDEVDTDEHGHGTHVAGTIGSKTFGVAKKVKLVAVKALGKDSRGPDSGIIAAMDWAVKHAKERGILGKAIMNLSLTGDTATALNEAAERAVEEGLFLGVAAGNNNRDAINESPASVETVCTAGASAENDEKASFSNFGSLRTSMAAPHVCGVAALLMSSEGIKAQEACDRIKKLARPAIRNPGNSTTNKLLYNKSGF.

An N-terminal signal peptide occupies residues 1–20 (MSILFKIFASTLAVVSVVNA). Residues 21 to 118 (GELLNFENER…VEPDRMASAT (98 aa)) constitute a propeptide that is removed on maturation. One can recognise an Inhibitor I9 domain in the interval 36 to 114 (SYIVVMKDGT…HVKYVEPDRM (79 aa)). The Peptidase S8 domain maps to 128–377 (SWGLGRISHT…NKLLYNKSGF (250 aa)). Catalysis depends on charge relay system residues aspartate 160 and histidine 191. Asparagine 252 carries an N-linked (GlcNAc...) asparagine glycan. Residue serine 323 is the Charge relay system of the active site. N-linked (GlcNAc...) asparagine glycans are attached at residues asparagine 364 and asparagine 373.

The protein belongs to the peptidase S8 family.

It localises to the secreted. In terms of biological role, secreted subtilisin-like serine protease with keratinolytic activity that contributes to pathogenicity. The sequence is that of Subtilisin-like protease CPC735_012930 from Coccidioides posadasii (strain C735) (Valley fever fungus).